Consider the following 240-residue polypeptide: 1-(5-phosphoribosyl)-5-[(5-phosphoribosylamino)methylideneamino] imidazole-4-carboxamide isomerase (240 aa).

Catalysis depends on aspartate 8, which acts as the Proton acceptor. Aspartate 129 acts as the Proton donor in catalysis.

The protein belongs to the HisA/HisF family.

It localises to the cytoplasm. It carries out the reaction 1-(5-phospho-beta-D-ribosyl)-5-[(5-phospho-beta-D-ribosylamino)methylideneamino]imidazole-4-carboxamide = 5-[(5-phospho-1-deoxy-D-ribulos-1-ylimino)methylamino]-1-(5-phospho-beta-D-ribosyl)imidazole-4-carboxamide. Its pathway is amino-acid biosynthesis; L-histidine biosynthesis; L-histidine from 5-phospho-alpha-D-ribose 1-diphosphate: step 4/9. This is 1-(5-phosphoribosyl)-5-[(5-phosphoribosylamino)methylideneamino] imidazole-4-carboxamide isomerase from Clostridium beijerinckii (strain ATCC 51743 / NCIMB 8052) (Clostridium acetobutylicum).